Consider the following 354-residue polypeptide: Serum paraoxonase/lactonase 3 (354 aa).

A disulfide bridge connects residues Cys-42 and Cys-352. N-linked (GlcNAc...) asparagine glycosylation is present at Asn-50. Ca(2+)-binding residues include Glu-53 and Asp-54. Residue His-114 is the Proton acceptor of the active site. Ile-116 contacts Ca(2+). Phosphoserine is present on Ser-165. Residues Asn-167, Asp-168, Asn-223, Asp-268, and Asn-269 each contribute to the Ca(2+) site. Residues Asn-269 and Asn-323 are each glycosylated (N-linked (GlcNAc...) asparagine).

It belongs to the paraoxonase family. As to quaternary structure, homodimer. Requires Ca(2+) as cofactor. Post-translationally, glycosylated. The signal sequence is not cleaved.

Its subcellular location is the secreted. The protein resides in the extracellular space. It carries out the reaction a phenyl acetate + H2O = a phenol + acetate + H(+). The enzyme catalyses An aryl dialkyl phosphate + H2O = dialkyl phosphate + an aryl alcohol.. It catalyses the reaction an N-acyl-L-homoserine lactone + H2O = an N-acyl-L-homoserine + H(+). In terms of biological role, has low activity towards the organophosphate paraxon and aromatic carboxylic acid esters. Rapidly hydrolyzes lactones such as statin prodrugs (e.g. lovastatin). Hydrolyzes aromatic lactones and 5- or 6-member ring lactones with aliphatic substituents but not simple lactones or those with polar substituents. This Mus musculus (Mouse) protein is Serum paraoxonase/lactonase 3 (Pon3).